The following is a 216-amino-acid chain: Adenylate kinase (216 aa).

Position 10 to 15 (10 to 15) interacts with ATP; the sequence is GAGKGT. The interval 30 to 59 is NMP; sequence STGDIFRKNISENTPLGIEAKGYIDNGQLV. Residues threonine 31, arginine 36, 57-59, 85-88, and glutamine 92 each bind AMP; these read QLV and GFPR. Residues 126 to 163 are LID; the sequence is GRRVCPSCGASYHVKFNPPTNEGKCDLCGSEVIQRKDD. An ATP-binding site is contributed by arginine 127. Positions 130 and 133 each coordinate Zn(2+). Residue 136-137 coordinates ATP; it reads SY. Positions 150 and 153 each coordinate Zn(2+). Positions 160 and 171 each coordinate AMP. ATP is bound at residue lysine 199.

It belongs to the adenylate kinase family. As to quaternary structure, monomer.

The protein localises to the cytoplasm. The enzyme catalyses AMP + ATP = 2 ADP. It participates in purine metabolism; AMP biosynthesis via salvage pathway; AMP from ADP: step 1/1. Catalyzes the reversible transfer of the terminal phosphate group between ATP and AMP. Plays an important role in cellular energy homeostasis and in adenine nucleotide metabolism. This chain is Adenylate kinase, found in Clostridium beijerinckii (strain ATCC 51743 / NCIMB 8052) (Clostridium acetobutylicum).